The chain runs to 359 residues: N-acetyl-gamma-glutamyl-phosphate reductase (359 aa).

Residue Cys162 is part of the active site.

This sequence belongs to the NAGSA dehydrogenase family. Type 1 subfamily.

It is found in the cytoplasm. It catalyses the reaction N-acetyl-L-glutamate 5-semialdehyde + phosphate + NADP(+) = N-acetyl-L-glutamyl 5-phosphate + NADPH + H(+). It participates in amino-acid biosynthesis; L-arginine biosynthesis; N(2)-acetyl-L-ornithine from L-glutamate: step 3/4. Functionally, catalyzes the NADPH-dependent reduction of N-acetyl-5-glutamyl phosphate to yield N-acetyl-L-glutamate 5-semialdehyde. The sequence is that of N-acetyl-gamma-glutamyl-phosphate reductase from Prochlorococcus marinus (strain SARG / CCMP1375 / SS120).